An 86-amino-acid polypeptide reads, in one-letter code: Large ribosomal subunit protein uL23c (86 aa).

Belongs to the universal ribosomal protein uL23 family. As to quaternary structure, part of the 50S ribosomal subunit.

The protein resides in the plastid. It localises to the chloroplast. Functionally, binds to 23S rRNA. The chain is Large ribosomal subunit protein uL23c (rpl23) from Chlorella vulgaris (Green alga).